The following is a 327-amino-acid chain: Polyprenyl transferase andD (327 aa).

The next 8 helical transmembrane spans lie at 49-69 (LGYI…ASIA), 81-101 (ITLL…WDDI), 140-160 (FAFV…MLFF), 174-194 (PQLI…GLNL), 201-221 (IPMA…DIIY), 244-264 (CLDA…VIAG), 271-291 (APFF…LAMA), and 307-327 (CCTS…VWRS).

This sequence belongs to the UbiA prenyltransferase family. It depends on Mg(2+) as a cofactor.

It is found in the membrane. The protein operates within secondary metabolite biosynthesis; terpenoid biosynthesis. Its function is as follows. Polyprenyl transferase; part of the gene cluster that mediates the biosynthesis of anditomin, a fungal meroterpenoid. The first step of the pathway is the synthesis of 3,5-dimethylorsellinic acid (DMOA) by the polyketide synthase andM. DMOA is then converted to the phthalide compound 5,7-dihydroxy-4,6-dimethylphthalide (DHDMP) by the cytochrome P450 monooxygenase andK, which is further prenylated by the prenyltransferase andD to yield farnesyl-DHDMP. Further epoxidation by the FAD-dependent monooxygenase andE leads to epoxyfarnesyl-DHDMP. The next step involves the terpene cyclase andB that converts epoxyfarnesyl-DHDMP into preandiloid A through opening of the epoxide ring followed by the cyclization of the farnesyl moiety. Preandiloid A is in turn oxidized at the C-3 hydroxyl group to yield preandiloid B by the dehydrogenase andC. The dioxygenase andA is solely responsible for the dehydrogenation of preandiloid B leading to the enone preandiloid C, as well as for the intriguing structural rearrangement to generate the bicyclo[2.2.2]octane core, transforming preandiloid C into andiconin. FAD-binding monooxygenase andJ then produces andilesin D which is reduced by dehydrogenase andI to yield andilesin A. Action of acetyltransferase andG followed by a spontaneous acetate elimination leads then to andilesin B, which is in turn substrate of the short chain dehydrogenase andH to yield andilesin C. Finally, the dioxygenase andF catalyzes the transformation of andilesin C to anditomin. The chain is Polyprenyl transferase andD from Emericella variicolor (Aspergillus stellatus).